The following is a 447-amino-acid chain: tRNA-2-methylthio-N(6)-dimethylallyladenosine synthase (447 aa).

Positions 10–128 (KLFCISTYGC…FPEYLHRVLQ (119 aa)) constitute an MTTase N-terminal domain. Cysteine 19, cysteine 55, cysteine 89, cysteine 165, cysteine 169, and cysteine 172 together coordinate [4Fe-4S] cluster. The Radical SAM core domain maps to 151–382 (RKSDVKAFVT…EAINKKVVIK (232 aa)). Positions 384-447 (KEYEGKVVEV…PFSLIGEIVE (64 aa)) constitute a TRAM domain.

This sequence belongs to the methylthiotransferase family. MiaB subfamily. As to quaternary structure, monomer. [4Fe-4S] cluster is required as a cofactor.

The protein localises to the cytoplasm. It catalyses the reaction N(6)-dimethylallyladenosine(37) in tRNA + (sulfur carrier)-SH + AH2 + 2 S-adenosyl-L-methionine = 2-methylsulfanyl-N(6)-dimethylallyladenosine(37) in tRNA + (sulfur carrier)-H + 5'-deoxyadenosine + L-methionine + A + S-adenosyl-L-homocysteine + 2 H(+). Its function is as follows. Catalyzes the methylthiolation of N6-(dimethylallyl)adenosine (i(6)A), leading to the formation of 2-methylthio-N6-(dimethylallyl)adenosine (ms(2)i(6)A) at position 37 in tRNAs that read codons beginning with uridine. This chain is tRNA-2-methylthio-N(6)-dimethylallyladenosine synthase, found in Clostridium perfringens (strain ATCC 13124 / DSM 756 / JCM 1290 / NCIMB 6125 / NCTC 8237 / Type A).